The following is a 183-amino-acid chain: Fetal and adult testis-expressed transcript protein (183 aa).

The disordered stretch occupies residues 42-66 (SRSRGASQKKQKLEQKAAGSASAKR). A helical membrane pass occupies residues 163-181 (TLIIAVLVSASIANLWLWM).

In terms of assembly, interacts with BIK and RNF183. Interacts with IMMT/MIC60and EMD. Testis-specific in fetus (aged from 6 to 11 weeks). In adult, expressed predominantly in testis, with some expression in lung, heart, kidney, adrenal gland and whole brain. Highly expressed in certain types of cancer tissues such as hepatocellular carcinoma, colon and gastric cancer. Weakly expressed in normal pancreas.

The protein localises to the mitochondrion. It localises to the mitochondrion outer membrane. It is found in the endoplasmic reticulum membrane. Its function is as follows. Involved in the regulation of endoplasmic reticulum (ER)-mitochondria coupling. Negatively regulates the ER-mitochondria distance and Ca(2+) transfer from ER to mitochondria possibly implicating it in the regulation of apoptosis. May collaborate with RNF183 to restrain BIK protein levels thus regulating apoptotic signaling. This Homo sapiens (Human) protein is Fetal and adult testis-expressed transcript protein (FATE1).